A 495-amino-acid polypeptide reads, in one-letter code: UDP-N-acetylmuramoyl-L-alanyl-D-glutamate--2,6-diaminopimelate ligase (495 aa).

Residue Ser29 coordinates UDP-N-acetyl-alpha-D-muramoyl-L-alanyl-D-glutamate. 111 to 117 provides a ligand contact to ATP; that stretch reads GTNGKTS. Residues 153 to 154, Ser180, Gln186, and Arg188 contribute to the UDP-N-acetyl-alpha-D-muramoyl-L-alanyl-D-glutamate site; that span reads TT. The residue at position 220 (Lys220) is an N6-carboxylysine. Residues Arg384, 408–411, Gly459, and Glu463 contribute to the meso-2,6-diaminopimelate site; that span reads DNPR. The Meso-diaminopimelate recognition motif motif lies at 408–411; sequence DNPR.

The protein belongs to the MurCDEF family. MurE subfamily. Requires Mg(2+) as cofactor. Carboxylation is probably crucial for Mg(2+) binding and, consequently, for the gamma-phosphate positioning of ATP.

Its subcellular location is the cytoplasm. It catalyses the reaction UDP-N-acetyl-alpha-D-muramoyl-L-alanyl-D-glutamate + meso-2,6-diaminopimelate + ATP = UDP-N-acetyl-alpha-D-muramoyl-L-alanyl-gamma-D-glutamyl-meso-2,6-diaminopimelate + ADP + phosphate + H(+). The protein operates within cell wall biogenesis; peptidoglycan biosynthesis. Functionally, catalyzes the addition of meso-diaminopimelic acid to the nucleotide precursor UDP-N-acetylmuramoyl-L-alanyl-D-glutamate (UMAG) in the biosynthesis of bacterial cell-wall peptidoglycan. The sequence is that of UDP-N-acetylmuramoyl-L-alanyl-D-glutamate--2,6-diaminopimelate ligase from Xanthomonas oryzae pv. oryzae (strain MAFF 311018).